The following is a 255-amino-acid chain: Pyrroloquinoline-quinone synthase (255 aa).

This sequence belongs to the PqqC family.

It catalyses the reaction 6-(2-amino-2-carboxyethyl)-7,8-dioxo-1,2,3,4,7,8-hexahydroquinoline-2,4-dicarboxylate + 3 O2 = pyrroloquinoline quinone + 2 H2O2 + 2 H2O + H(+). It participates in cofactor biosynthesis; pyrroloquinoline quinone biosynthesis. Functionally, ring cyclization and eight-electron oxidation of 3a-(2-amino-2-carboxyethyl)-4,5-dioxo-4,5,6,7,8,9-hexahydroquinoline-7,9-dicarboxylic-acid to PQQ. This chain is Pyrroloquinoline-quinone synthase, found in Acinetobacter baylyi (strain ATCC 33305 / BD413 / ADP1).